The following is a 245-amino-acid chain: Uridylate kinase (245 aa).

Position 16–19 (16–19) interacts with ATP; the sequence is KLSG. Gly-58 is a UMP binding site. ATP contacts are provided by Gly-59 and Arg-63. UMP is bound by residues Asp-78 and 139 to 146; that span reads TGNPFFTT. 3 residues coordinate ATP: Thr-166, Tyr-172, and Asp-175.

Belongs to the UMP kinase family. In terms of assembly, homohexamer.

It localises to the cytoplasm. It carries out the reaction UMP + ATP = UDP + ADP. It participates in pyrimidine metabolism; CTP biosynthesis via de novo pathway; UDP from UMP (UMPK route): step 1/1. With respect to regulation, inhibited by UTP. Functionally, catalyzes the reversible phosphorylation of UMP to UDP. The chain is Uridylate kinase from Idiomarina loihiensis (strain ATCC BAA-735 / DSM 15497 / L2-TR).